Here is a 185-residue protein sequence, read N- to C-terminus: Protein GrpE (185 aa).

The segment at 1–22 (MTASQEPVDQAPESNEPAPAVP) is disordered.

This sequence belongs to the GrpE family. In terms of assembly, homodimer.

It localises to the cytoplasm. Participates actively in the response to hyperosmotic and heat shock by preventing the aggregation of stress-denatured proteins, in association with DnaK and GrpE. It is the nucleotide exchange factor for DnaK and may function as a thermosensor. Unfolded proteins bind initially to DnaJ; upon interaction with the DnaJ-bound protein, DnaK hydrolyzes its bound ATP, resulting in the formation of a stable complex. GrpE releases ADP from DnaK; ATP binding to DnaK triggers the release of the substrate protein, thus completing the reaction cycle. Several rounds of ATP-dependent interactions between DnaJ, DnaK and GrpE are required for fully efficient folding. This chain is Protein GrpE, found in Bordetella petrii (strain ATCC BAA-461 / DSM 12804 / CCUG 43448).